A 3584-amino-acid chain; its full sequence is D-lysergyl-peptide-synthetase subunit 1 (3584 aa).

Residues 25 to 44 (IESINGDKNKSERHTASSSA) form a disordered region. The segment covering 29-39 (NGDKNKSERHT) has biased composition (basic and acidic residues). The segment at 307–706 (SCCSRPNSQA…LGRKDDQVKI (400 aa)) is adenylation (A) domain 1. The Carrier 1 domain occupies 848–917 (REKLLQALFA…TLREIVIVST (70 aa)). An O-(pantetheine 4'-phosphoryl)serine modification is found at serine 880. Residues 962–1353 (EDIYPCTHLQ…EHILTQIHSN (392 aa)) are condensation (C) domain 1. Residues 1396-1803 (QAKCQAQPDA…RRKDAQVKIR (408 aa)) form an adenylation (A) domain 2 region. One can recognise a Carrier 2 domain in the interval 1948–2016 (TEHEISAIWA…TIRKLALARG (69 aa)). Serine 1980 carries the O-(pantetheine 4'-phosphoryl)serine modification. The condensation (C) domain 2 stretch occupies residues 2066-2483 (ERIYPCSPIQ…ALPVLDEDQM (418 aa)). Positions 2508–2906 (QCIRCPDSPS…GRNDDQVKVR (399 aa)) are adenylation (A) domain 3. Residues 3041–3109 (MEAELQQLVG…RLSDLARIVE (69 aa)) form the Carrier 3 domain. Position 3073 is an O-(pantetheine 4'-phosphoryl)serine (serine 3073). The segment at 3174–3472 (LYFSKPMASE…VAKSTTWSSD (299 aa)) is cyclization (Cyc) domain.

The protein belongs to the NRP synthetase family.

It functions in the pathway alkaloid biosynthesis; ergot alkaloid biosynthesis. D-lysergyl-peptide-synthetase subunit 1; part of the gene cluster that mediates the biosynthesis of fungal ergot alkaloid. DmaW catalyzes the first step of ergot alkaloid biosynthesis by condensing dimethylallyl diphosphate (DMAP) and tryptophan to form 4-dimethylallyl-L-tryptophan. The second step is catalyzed by the methyltransferase easF that methylates 4-dimethylallyl-L-tryptophan in the presence of S-adenosyl-L-methionine, resulting in the formation of 4-dimethylallyl-L-abrine. The catalase easC and the FAD-dependent oxidoreductase easE then transform 4-dimethylallyl-L-abrine to chanoclavine-I which is further oxidized by easD in the presence of NAD(+), resulting in the formation of chanoclavine-I aldehyde. Agroclavine dehydrogenase easG then mediates the conversion of chanoclavine-I aldehyde to agroclavine via a non-enzymatic adduct reaction: the substrate is an iminium intermediate that is formed spontaneously from chanoclavine-I aldehyde in the presence of glutathione. The presence of easA is not required to complete this reaction. Further conversion of agroclavine to paspalic acid is a two-step process involving oxidation of agroclavine to elymoclavine and of elymoclavine to paspalic acid, the second step being performed by the elymoclavine oxidase cloA. Paspalic acid is then further converted to D-lysergic acid. Ergopeptines are assembled from D-lysergic acid and three different amino acids by the D-lysergyl-peptide-synthetases composed each of a monomudular and a trimodular nonribosomal peptide synthetase subunit. LpsB and lpsC encode the monomodular subunits responsible for D-lysergic acid activation and incorporation into the ergopeptine backbone. LpsA1 and A2 subunits encode the trimodular nonribosomal peptide synthetase assembling the tripeptide portion of ergopeptines. LpsA1 is responsible for formation of the major ergopeptine, ergotamine, and lpsA2 for alpha-ergocryptine, the minor ergopeptine of the total alkaloid mixture elaborated by C.purpurea. D-lysergyl-tripeptides are assembled by the nonribosomal peptide synthetases and released as N-(D-lysergyl-aminoacyl)-lactams. Cyclolization of the D-lysergyl-tripeptides is performed by the Fe(2+)/2-ketoglutarate-dependent dioxygenase easH which introduces a hydroxyl group into N-(D-lysergyl-aminoacyl)-lactam at alpha-C of the aminoacyl residue followed by spontaneous condensation with the terminal lactam carbonyl group. The polypeptide is D-lysergyl-peptide-synthetase subunit 1 (Claviceps purpurea (strain 20.1) (Ergot fungus)).